Consider the following 524-residue polypeptide: METQPQQPPPPPVAEKLNPKLEKELNLESLKTRAVSLAKAIARILEDFDAYGRTNTTPKWQDILGQYSMVNLELFNIVEEVKRVSNAFVVLPKNVNAMNAAILPVMLSSKLLPEMETDDNAKREQLLQGVQSLPIPMQIERLKARMDMIAAACENAERVLADTRKAYGFGTRQGPSMLPTMDKGQAAKIQEQEKMLRDAVNDGKGTQLPPDQRQITTALPPHLADVLIINDAGKIALPGQSNNINNQGMMQVSGTQFVGRSAASPSGPNFDNTTSPLPYSNSPRATGMVNVPSPQHQIQQQQFQQQQQRSKLMQLPQHQQQQLLAQQQQQLRQSSMQGLGQSQIPALHDMHGQAQQKFQTSHGQHQMPYSQPMGAHQQFQARQLSGGHIQHSMSQGQLNPAMNRHLNQFSGGANSALFTSAQGSPSSQMIPNMSSMQSQTLVPRMQQFGVSGTNPQRSHSSQMLGDQMFNTSGMMQTQQTQIQQSQQQQQQQQQGGYGNMQTNQQSLQPNNMMQNAQQRHQNPQ.

N-acetylmethionine is present on Met1. Residues 137–162 (MQIERLKARMDMIAAACENAERVLAD) are a coiled coil. Disordered regions lie at residues 291–315 (VPSPQHQIQQQQFQQQQQRSKLMQL) and 474–524 (MMQT…QNPQ). Composition is skewed to low complexity over residues 295–315 (QHQIQQQQFQQQQQRSKLMQL) and 474–505 (MMQTQQTQIQQSQQQQQQQQQGGYGNMQTNQQ). A compositionally biased stretch (polar residues) spans 506–524 (SLQPNNMMQNAQQRHQNPQ).

The protein belongs to the Mediator complex subunit 8 family. Component of the Mediator complex.

It localises to the nucleus. Its function is as follows. Component of the Mediator complex, a coactivator involved in the regulated transcription of nearly all RNA polymerase II-dependent genes. Mediator functions as a bridge to convey information from gene-specific regulatory proteins to the basal RNA polymerase II transcription machinery. The Mediator complex, having a compact conformation in its free form, is recruited to promoters by direct interactions with regulatory proteins and serves for the assembly of a functional preinitiation complex with RNA polymerase II and the general transcription factors. Regulator of both plant defense and flowering time. Involved in pollen tube growth. This chain is Mediator of RNA polymerase II transcription subunit 8 (MED8), found in Arabidopsis thaliana (Mouse-ear cress).